We begin with the raw amino-acid sequence, 154 residues long: Lipoprotein signal peptidase (154 aa).

A run of 2 helical transmembrane segments spans residues 55–75 (GHMW…IYIM) and 84–104 (LFSI…IDRV). Residues D111 and D129 contribute to the active site. The chain crosses the membrane as a helical span at residues 124 to 144 (IFNVADASLSVGVVLMLVYVF).

It belongs to the peptidase A8 family.

It is found in the cell membrane. The catalysed reaction is Release of signal peptides from bacterial membrane prolipoproteins. Hydrolyzes -Xaa-Yaa-Zaa-|-(S,diacylglyceryl)Cys-, in which Xaa is hydrophobic (preferably Leu), and Yaa (Ala or Ser) and Zaa (Gly or Ala) have small, neutral side chains.. The protein operates within protein modification; lipoprotein biosynthesis (signal peptide cleavage). Its function is as follows. This protein specifically catalyzes the removal of signal peptides from prolipoproteins. The polypeptide is Lipoprotein signal peptidase (Listeria welshimeri serovar 6b (strain ATCC 35897 / DSM 20650 / CCUG 15529 / CIP 8149 / NCTC 11857 / SLCC 5334 / V8)).